A 90-amino-acid polypeptide reads, in one-letter code: Small ribosomal subunit protein bS16 (90 aa).

This sequence belongs to the bacterial ribosomal protein bS16 family.

The chain is Small ribosomal subunit protein bS16 from Streptococcus thermophilus (strain CNRZ 1066).